The sequence spans 145 residues: Small ribosomal subunit protein eS19 (145 aa).

Lys23 is subject to N6-acetyllysine. Arg67 carries the omega-N-methylarginine modification. N6-acetyllysine is present on residues Lys111 and Lys115. An N6-succinyllysine modification is found at Lys143.

Belongs to the eukaryotic ribosomal protein eS19 family. Component of the small ribosomal subunit. Part of the small subunit (SSU) processome, composed of more than 70 proteins and the RNA chaperone small nucleolar RNA (snoRNA) U3. Interacts with RPS19BP1.

The protein resides in the cytoplasm. The protein localises to the nucleus. It localises to the nucleolus. Functionally, component of the small ribosomal subunit. The ribosome is a large ribonucleoprotein complex responsible for the synthesis of proteins in the cell. Required for pre-rRNA processing and maturation of 40S ribosomal subunits. Part of the small subunit (SSU) processome, first precursor of the small eukaryotic ribosomal subunit. During the assembly of the SSU processome in the nucleolus, many ribosome biogenesis factors, an RNA chaperone and ribosomal proteins associate with the nascent pre-rRNA and work in concert to generate RNA folding, modifications, rearrangements and cleavage as well as targeted degradation of pre-ribosomal RNA by the RNA exosome. This chain is Small ribosomal subunit protein eS19 (Rps19), found in Rattus norvegicus (Rat).